We begin with the raw amino-acid sequence, 147 residues long: Effector TSP1 (147 aa).

The signal sequence occupies residues 1–19; the sequence is MQITKTLVATLFAASTAFA. Intrachain disulfides connect C44–C51 and C67–C87.

In terms of assembly, homodimer.

The protein resides in the secreted. Its function is as follows. Stimulates salicylic acid signaling in host plant roots. This Hypocrea virens (strain Gv29-8 / FGSC 10586) (Gliocladium virens) protein is Effector TSP1.